The primary structure comprises 204 residues: Lysozyme G (204 aa).

The first 19 residues, 1 to 19, serve as a signal peptide directing secretion; that stretch reads MHLMLVLLGLAALLGTSQS. 2 disulfides stabilise this stretch: C23/C79 and C37/C48. Residues E92 and D105 contribute to the active site.

This sequence belongs to the glycosyl hydrolase 23 family.

It localises to the secreted. It carries out the reaction Hydrolysis of (1-&gt;4)-beta-linkages between N-acetylmuramic acid and N-acetyl-D-glucosamine residues in a peptidoglycan and between N-acetyl-D-glucosamine residues in chitodextrins.. Its function is as follows. Has bacteriolytic activity against M.luteus. In Dromaius novaehollandiae (Emu), this protein is Lysozyme G.